Consider the following 79-residue polypeptide: NAD(P)H-quinone oxidoreductase subunit L (79 aa).

The next 2 membrane-spanning stretches (helical) occupy residues 10–30 and 48–68; these read IIIA…IPAV and GFMY…SPFL.

Belongs to the complex I NdhL subunit family. NDH-1 can be composed of about 15 different subunits; different subcomplexes with different compositions have been identified which probably have different functions.

The protein resides in the cellular thylakoid membrane. The catalysed reaction is a plastoquinone + NADH + (n+1) H(+)(in) = a plastoquinol + NAD(+) + n H(+)(out). The enzyme catalyses a plastoquinone + NADPH + (n+1) H(+)(in) = a plastoquinol + NADP(+) + n H(+)(out). Functionally, NDH-1 shuttles electrons from an unknown electron donor, via FMN and iron-sulfur (Fe-S) centers, to quinones in the respiratory and/or the photosynthetic chain. The immediate electron acceptor for the enzyme in this species is believed to be plastoquinone. Couples the redox reaction to proton translocation, and thus conserves the redox energy in a proton gradient. Cyanobacterial NDH-1 also plays a role in inorganic carbon-concentration. This is NAD(P)H-quinone oxidoreductase subunit L from Microcystis aeruginosa (strain NIES-843 / IAM M-2473).